Reading from the N-terminus, the 43-residue chain is Protein PsbN (43 aa).

The chain crosses the membrane as a helical span at residues 5–27 (TLVAISISGLLVSFTGYALYTAF).

It belongs to the PsbN family.

The protein resides in the plastid. It is found in the chloroplast thylakoid membrane. May play a role in photosystem I and II biogenesis. This is Protein PsbN from Eucalyptus globulus subsp. globulus (Tasmanian blue gum).